The following is a 316-amino-acid chain: Cobalamin biosynthesis protein CobD (316 aa).

5 consecutive transmembrane segments (helical) span residues 45–65 (FSPY…ALGV), 78–100 (PVLY…SLAF), 151–171 (DGVI…AMTY), 209–229 (LTWL…KGAL), and 291–311 (ISLL…FYLV).

It belongs to the CobD/CbiB family.

Its subcellular location is the cell membrane. Its pathway is cofactor biosynthesis; adenosylcobalamin biosynthesis. Converts cobyric acid to cobinamide by the addition of aminopropanol on the F carboxylic group. In Streptococcus sanguinis (strain SK36), this protein is Cobalamin biosynthesis protein CobD.